A 456-amino-acid chain; its full sequence is MSLSVRTSALSRRSSSQNGVAGRPWGASASSVACGYGGTASGFGVGCGGLLSAASMFGSSSGFSGGSTGCSPGLGTAYGGPLGAGVGGMGIGGSSGGGSLCIFSGNDGGLLSGSEKETMQNLNDRLASYLGKVRALEEANAELENKIREWYETRRTGDSGSQSDYSKYYPLIEDLKNKIISASVSNAQLLLQIDNARLAAEDFRMKYENELALRQTVEADINGLRRVLDELTLARADLEAQTENLTEELAYMKKNHEEELQSFQAGGPGEVNVEMDAAPGVDLTKSGELRKEINSNTEQLQSSKSEVTDLKRMVQNLEIELQSQLAMKSSLEGSLAETEGGYCCQLSQMQQLIGSLEEQLQQLRADAERQNEDHQRLLGVKARLEMEIETYRRLLEGDTQGDGFDESLSLTVSKPQAPSVDSSKDPNKTRKIKTVVQEIVNGEVVSSQVQELEEAM.

The span at 1–19 (MSLSVRTSALSRRSSSQNG) shows a compositional bias: polar residues. Residues 1 to 25 (MSLSVRTSALSRRSSSQNGVAGRPW) are disordered. Positions 1–114 (MSLSVRTSAL…GNDGGLLSGS (114 aa)) are head. The segment at 115 to 150 (EKETMQNLNDRLASYLGKVRALEEANAELENKIREW) is coil 1A. One can recognise an IF rod domain in the interval 115 to 402 (EKETMQNLND…RLLEGDTQGD (288 aa)). Residues 154–171 (RRTGDSGSQSDYSKYYPL) form a linker 1 region. The tract at residues 172 to 263 (IEDLKNKIIS…KNHEEELQSF (92 aa)) is coil 1B. A linker 12 region spans residues 264-286 (QAGGPGEVNVEMDAAPGVDLTKS). The tract at residues 287-397 (GELRKEINSN…IETYRRLLEG (111 aa)) is coil 2. Positions 398–456 (DTQGDGFDESLSLTVSKPQAPSVDSSKDPNKTRKIKTVVQEIVNGEVVSSQVQELEEAM) are tail. The segment at 405 to 430 (DESLSLTVSKPQAPSVDSSKDPNKTR) is disordered. The span at 408–421 (LSLTVSKPQAPSVD) shows a compositional bias: polar residues.

The protein belongs to the intermediate filament family. Heterotetramer of two type I and two type II keratins. Keratin-3 associates with keratin-12.

Involved in corneal epithelium organization, integrity and corneal keratin expression. The protein is Keratin, type I cytoskeletal 12 of Rattus norvegicus (Rat).